The chain runs to 297 residues: Acetyl-coenzyme A carboxylase carboxyl transferase subunit beta (297 aa).

The CoA carboxyltransferase N-terminal domain maps to 25-294 (LWVKCPETGQ…LPPKGRLPRP (270 aa)).

The protein belongs to the AccD/PCCB family. Acetyl-CoA carboxylase is a heterohexamer composed of biotin carboxyl carrier protein (AccB), biotin carboxylase (AccC) and two subunits each of ACCase subunit alpha (AccA) and ACCase subunit beta (AccD).

It localises to the cytoplasm. It catalyses the reaction N(6)-carboxybiotinyl-L-lysyl-[protein] + acetyl-CoA = N(6)-biotinyl-L-lysyl-[protein] + malonyl-CoA. Its pathway is lipid metabolism; malonyl-CoA biosynthesis; malonyl-CoA from acetyl-CoA: step 1/1. Component of the acetyl coenzyme A carboxylase (ACC) complex. Biotin carboxylase (BC) catalyzes the carboxylation of biotin on its carrier protein (BCCP) and then the CO(2) group is transferred by the transcarboxylase to acetyl-CoA to form malonyl-CoA. The polypeptide is Acetyl-coenzyme A carboxylase carboxyl transferase subunit beta (Xanthobacter autotrophicus (strain ATCC BAA-1158 / Py2)).